The following is a 475-amino-acid chain: Ankyrin repeat, SAM and basic leucine zipper domain-containing protein 1 (475 aa).

Residues 1–25 (MAAGALRGLPVAGGGESSESEDDGW) are disordered. A phosphoserine mark is found at Ser-17, Ser-18, and Ser-20. 6 ANK repeats span residues 45–74 (EKKE…SVDS), 78–107 (YGWT…NASF), 110–144 (DKQT…DPNV), 148–177 (RLMT…EVNT), 181–210 (NGYT…NKML), and 214–243 (DGKM…PLEG). The SAM domain occupies 272-334 (SYTAFGDLEV…KILAALKELQ (63 aa)).

As to quaternary structure, interacts with DDX4, PIWIL1, RANBP9 and TDRD1.

Its subcellular location is the cytoplasm. In terms of biological role, plays a central role during spermatogenesis by repressing transposable elements and preventing their mobilization, which is essential for the germline integrity. Acts via the piRNA metabolic process, which mediates the repression of transposable elements during meiosis by forming complexes composed of piRNAs and Piwi proteins and governs the methylation and subsequent repression of transposons. Its association with pi-bodies suggests a participation in the primary piRNAs metabolic process. Required prior to the pachytene stage to facilitate the production of multiple types of piRNAs, including those associated with repeats involved in the regulation of retrotransposons. May act by mediating protein-protein interactions during germ cell maturation. In Papio anubis (Olive baboon), this protein is Ankyrin repeat, SAM and basic leucine zipper domain-containing protein 1 (ASZ1).